A 224-amino-acid chain; its full sequence is MTQDQLKQAVAQAAVDLILPKLDEKSVVGVGTGSTANFFIDALAQHKTAFDGAVASSEATAQRLKGHGIPVYELNSVSELEFYVDGADESDAHLNLIKGGGAALTREKIVAAVAKTFICIADASKLVPVLGAFPLPVEVIPMARSHVARQLVKLGGDPVYREGVVTDNGNVILDVHNLQITNPVELESQINAIVGVVTNGLFAARPADVLLLGTAEGVKTLKAE.

Residues 32-35 (TGST), 85-88 (DGAD), and 98-101 (KGGG) each bind substrate. The active-site Proton acceptor is Glu107. Residue Lys125 coordinates substrate.

This sequence belongs to the ribose 5-phosphate isomerase family. In terms of assembly, homodimer.

It carries out the reaction aldehydo-D-ribose 5-phosphate = D-ribulose 5-phosphate. It participates in carbohydrate degradation; pentose phosphate pathway; D-ribose 5-phosphate from D-ribulose 5-phosphate (non-oxidative stage): step 1/1. Its function is as follows. Catalyzes the reversible conversion of ribose-5-phosphate to ribulose 5-phosphate. The protein is Ribose-5-phosphate isomerase A of Pseudomonas entomophila (strain L48).